Consider the following 451-residue polypeptide: Chromosomal replication initiator protein DnaA (451 aa).

The domain I, interacts with DnaA modulators stretch occupies residues 1 to 77 (MTENEQIFWN…EVYNAQISVD (77 aa)). The domain II stretch occupies residues 77–110 (DYVFEEDLMIEQNQTKINQKPKQQALNSLPTVTS). Residues 111-329 (DLNSKYSFEN…GALKDISLGA (219 aa)) are domain III, AAA+ region. ATP-binding residues include Gly155, Gly157, Lys158, and Thr159. The interval 330 to 451 (NFKQIDTITV…EIETIKNKIK (122 aa)) is domain IV, binds dsDNA.

It belongs to the DnaA family. Oligomerizes as a right-handed, spiral filament on DNA at oriC.

It is found in the cytoplasm. Functionally, plays an essential role in the initiation and regulation of chromosomal replication. ATP-DnaA binds to the origin of replication (oriC) to initiate formation of the DNA replication initiation complex once per cell cycle. Binds the DnaA box (a 9 base pair repeat at the origin) and separates the double-stranded (ds)DNA. Forms a right-handed helical filament on oriC DNA; dsDNA binds to the exterior of the filament while single-stranded (ss)DNA is stabiized in the filament's interior. The ATP-DnaA-oriC complex binds and stabilizes one strand of the AT-rich DNA unwinding element (DUE), permitting loading of DNA polymerase. After initiation quickly degrades to an ADP-DnaA complex that is not apt for DNA replication. Binds acidic phospholipids. This Streptococcus pyogenes serotype M49 (strain NZ131) protein is Chromosomal replication initiator protein DnaA.